The sequence spans 538 residues: MMVQSIQIVLPVALFFLIVFNGFTVEGSKKEAQLYRDLLTNYSYLVRPVRNPKKALTVTMKVFIQQVLLVDAKHQMIEVNAWLKYIWTDFRLRWNPLDYENITSVRFQGEDQIWQPDILLYNRYIEDEQESFDITYKTNAVAYSDGVINWIPPGIFKLSCKMDITLFPFDEQICFMKFGSWTYHGFALDLRLDVVKGQEPSADLSTYITNGEWHLLSAPARREEKFYKCCKEPYPTVKFYLHLRRRTFYYVFNVVLPTLLVSFMSLLAFCLPATDLSEKIGLQTTILLSVCFFLTILSEMTPTTSEAVPLLGVFFSALTFIVAMSTTFTILVLNIRYRQITNHYLSPMFRSIFLECLPWLMMMKRPDHKFRRGSSYRDSSADQCVQCAKNAELKSILRGTDNQQQIETNTFYPFPTETLSLNRKVGDGLFIQRRCQIHEEARSEKFTHGMLACEKSLRENGSELANILVTILKMYEVMVSQVERIRKRIALKRKRKDIQDEWKFAAQAVDRFCLIIFTIVFIICCFIFVAIPPIKILD.

The signal sequence occupies residues 1-27; the sequence is MMVQSIQIVLPVALFFLIVFNGFTVEG. Residues 28 to 250 lie on the Extracellular side of the membrane; that stretch reads SKKEAQLYRD…LHLRRRTFYY (223 aa). N-linked (GlcNAc...) asparagine glycans are attached at residues Asn-41 and Asn-101. Disulfide bonds link Cys-160/Cys-174 and Cys-229/Cys-230. 3 helical membrane-spanning segments follow: residues 251–271, 280–300, and 313–333; these read VFNV…AFCL, IGLQ…LSEM, and VFFS…ILVL. The Cytoplasmic portion of the chain corresponds to 334–513; sequence NIRYRQITNH…FAAQAVDRFC (180 aa). The helical transmembrane segment at 514 to 534 threads the bilayer; that stretch reads LIIFTIVFIICCFIFVAIPPI.

This sequence belongs to the ligand-gated ion channel (TC 1.A.9) family. Acetylcholine receptor (TC 1.A.9.1) subfamily. In terms of assembly, forms a homooligomeric channel blocked by alpha-bungarotoxin. The structure is probably pentameric.

Its subcellular location is the postsynaptic cell membrane. The protein localises to the cell membrane. After binding acetylcholine, the AChR responds by an extensive change in conformation that affects all subunits and leads to opening of an ion-conducting channel across the plasma membrane. In Caenorhabditis elegans, this protein is Acetylcholine receptor subunit alpha-type acr-7 (acr-7).